We begin with the raw amino-acid sequence, 613 residues long: 4-hydroxy-3-methylbut-2-en-1-yl diphosphate synthase (flavodoxin) (613 aa).

[4Fe-4S] cluster-binding residues include cysteine 521, cysteine 524, cysteine 555, and glutamate 562.

This sequence belongs to the IspG family. [4Fe-4S] cluster is required as a cofactor.

It catalyses the reaction (2E)-4-hydroxy-3-methylbut-2-enyl diphosphate + oxidized [flavodoxin] + H2O + 2 H(+) = 2-C-methyl-D-erythritol 2,4-cyclic diphosphate + reduced [flavodoxin]. The protein operates within isoprenoid biosynthesis; isopentenyl diphosphate biosynthesis via DXP pathway; isopentenyl diphosphate from 1-deoxy-D-xylulose 5-phosphate: step 5/6. Converts 2C-methyl-D-erythritol 2,4-cyclodiphosphate (ME-2,4cPP) into 1-hydroxy-2-methyl-2-(E)-butenyl 4-diphosphate. The chain is 4-hydroxy-3-methylbut-2-en-1-yl diphosphate synthase (flavodoxin) from Bacteroides thetaiotaomicron (strain ATCC 29148 / DSM 2079 / JCM 5827 / CCUG 10774 / NCTC 10582 / VPI-5482 / E50).